We begin with the raw amino-acid sequence, 250 residues long: MSRLLLNCDIGESFGNWTLGLDAEVMPFIDCANIACGFHAGDPGIMRKTVALALANGVRIGAHPAYQDLAGFGRRSMSYSPEEIQDLLHYQVGALDGICRAQGGRVEYVKPHGAMYNDMMAKPAQLRAVIQAVAAYDPQLPLMLMATRDNSAAQALGDEYGVTLWFEAFADRAYDNAGHLVSRQLPGAVHHDAQTILQQALTIARGEPLAASDGSALLLHANTLCVHGDNASSVAAVQRIREALNQQSGL.

The protein belongs to the LamB/PxpA family. Forms a complex composed of PxpA, PxpB and PxpC.

The catalysed reaction is 5-oxo-L-proline + ATP + 2 H2O = L-glutamate + ADP + phosphate + H(+). Functionally, catalyzes the cleavage of 5-oxoproline to form L-glutamate coupled to the hydrolysis of ATP to ADP and inorganic phosphate. In Pseudomonas fluorescens (strain ATCC BAA-477 / NRRL B-23932 / Pf-5), this protein is 5-oxoprolinase subunit A.